The chain runs to 76 residues: Sea anemone sodium channel inhibitor type I (76 aa).

The first 19 residues, 1 to 19 (MNRMLIIFVVVTVFGLASG), serve as a signal peptide directing secretion. A propeptide spanning residues 20 to 30 (LGPNMPAPDLA) is cleaved from the precursor. 3 cysteine pairs are disulfide-bonded: Cys37–Cys72, Cys39–Cys60, and Cys53–Cys73.

This sequence belongs to the sea anemone sodium channel inhibitory toxin family. Type I subfamily. In terms of tissue distribution, expressed in acontia, a specialised envenomation structure laden with batteries of venom-containing nematocysts found only in the superfamily Metridioidea.

It is found in the secreted. The protein resides in the nematocyst. Its function is as follows. May affect sodium channels (Nav). This is Sea anemone sodium channel inhibitor type I from Calliactis polypus (Hermit crab anemone).